We begin with the raw amino-acid sequence, 73 residues long: Lactogenin (73 aa).

Q1 carries the post-translational modification Pyrrolidone carboxylic acid.

It belongs to the pancreatic ribonuclease family. In terms of tissue distribution, milk.

The protein resides in the secreted. Functionally, secretory RNase specific towards pyrimidine bases, with higher activity towards poly C than poly U. Inhibits cell-free translation. The protein is Lactogenin of Bos taurus (Bovine).